We begin with the raw amino-acid sequence, 426 residues long: FK506-binding protein 3 (426 aa).

Disordered stretches follow at residues 37–143 (SLDP…PKHQ) and 171–314 (TGNY…KKKK). Acidic residues-rich tracts occupy residues 65–94 (DYFE…EAEE), 111–131 (EDEE…DDVS), and 181–225 (QDEE…SEEE). 3 stretches are compositionally biased toward basic and acidic residues: residues 226 to 257 (GTPK…ESTS), 264 to 278 (KKDE…KELE), and 287 to 311 (VEKD…DGDK). The 87-residue stretch at 340 to 426 (GAKVGIRYIG…TFDIKLVSLK (87 aa)) folds into the PPIase FKBP-type domain.

The protein belongs to the FKBP-type PPIase family. FKBP3/4 subfamily.

It localises to the nucleus. The protein localises to the nucleolus. The enzyme catalyses [protein]-peptidylproline (omega=180) = [protein]-peptidylproline (omega=0). Inhibited by both FK506 and rapamycin. Its function is as follows. PPIases accelerate the folding of proteins. It catalyzes the cis-trans isomerization of proline imidic peptide bonds in oligopeptides. The polypeptide is FK506-binding protein 3 (FPR3) (Candida albicans (strain SC5314 / ATCC MYA-2876) (Yeast)).